Consider the following 512-residue polypeptide: Histidine ammonia-lyase (512 aa).

The segment at residues 143 to 145 is a cross-link (5-imidazolinone (Ala-Gly)); sequence ASG. Residue Ser144 is modified to 2,3-didehydroalanine (Ser).

This sequence belongs to the PAL/histidase family. Contains an active site 4-methylidene-imidazol-5-one (MIO), which is formed autocatalytically by cyclization and dehydration of residues Ala-Ser-Gly.

The protein resides in the cytoplasm. The enzyme catalyses L-histidine = trans-urocanate + NH4(+). The protein operates within amino-acid degradation; L-histidine degradation into L-glutamate; N-formimidoyl-L-glutamate from L-histidine: step 1/3. This is Histidine ammonia-lyase from Ruegeria pomeroyi (strain ATCC 700808 / DSM 15171 / DSS-3) (Silicibacter pomeroyi).